We begin with the raw amino-acid sequence, 549 residues long: CTP synthase (549 aa).

The segment at 1–272 (MPPKSSTTKH…DAYVVRRMDL (272 aa)) is amidoligase domain. S19 lines the CTP pocket. Position 19 (S19) interacts with UTP. Residues 20–25 (SLGKGL) and D77 contribute to the ATP site. Mg(2+)-binding residues include D77 and E146. Residues 153–155 (DIE), 193–198 (KTKPTQ), and K229 contribute to the CTP site. UTP is bound by residues 193 to 198 (KTKPTQ) and K229. Residues 301–548 (VGKYIDLPDA…VKAAVERKTS (248 aa)) form the Glutamine amidotransferase type-1 domain. G360 lines the L-glutamine pocket. The active-site Nucleophile; for glutamine hydrolysis is the C387. Residues 388–391 (LGLQ), E411, and R473 each bind L-glutamine. Catalysis depends on residues H521 and E523.

It belongs to the CTP synthase family. In terms of assembly, homotetramer.

The catalysed reaction is UTP + L-glutamine + ATP + H2O = CTP + L-glutamate + ADP + phosphate + 2 H(+). It carries out the reaction L-glutamine + H2O = L-glutamate + NH4(+). It catalyses the reaction UTP + NH4(+) + ATP = CTP + ADP + phosphate + 2 H(+). Its pathway is pyrimidine metabolism; CTP biosynthesis via de novo pathway; CTP from UDP: step 2/2. Its activity is regulated as follows. Allosterically activated by GTP, when glutamine is the substrate; GTP has no effect on the reaction when ammonia is the substrate. The allosteric effector GTP functions by stabilizing the protein conformation that binds the tetrahedral intermediate(s) formed during glutamine hydrolysis. Inhibited by the product CTP, via allosteric rather than competitive inhibition. Functionally, catalyzes the ATP-dependent amination of UTP to CTP with either L-glutamine or ammonia as the source of nitrogen. Regulates intracellular CTP levels through interactions with the four ribonucleotide triphosphates. The chain is CTP synthase from Streptomyces coelicolor (strain ATCC BAA-471 / A3(2) / M145).